Consider the following 273-residue polypeptide: 4-hydroxy-tetrahydrodipicolinate reductase (273 aa).

Residues 12-17 (GAGGRM) and Glu38 each bind NAD(+). An NADP(+)-binding site is contributed by Arg39. Residues 102–104 (GTT) and 126–129 (AANF) contribute to the NAD(+) site. His159 acts as the Proton donor/acceptor in catalysis. His160 is a (S)-2,3,4,5-tetrahydrodipicolinate binding site. The Proton donor role is filled by Lys163. 169-170 (GT) contributes to the (S)-2,3,4,5-tetrahydrodipicolinate binding site.

It belongs to the DapB family. In terms of assembly, homotetramer.

The protein localises to the cytoplasm. The catalysed reaction is (S)-2,3,4,5-tetrahydrodipicolinate + NAD(+) + H2O = (2S,4S)-4-hydroxy-2,3,4,5-tetrahydrodipicolinate + NADH + H(+). The enzyme catalyses (S)-2,3,4,5-tetrahydrodipicolinate + NADP(+) + H2O = (2S,4S)-4-hydroxy-2,3,4,5-tetrahydrodipicolinate + NADPH + H(+). It functions in the pathway amino-acid biosynthesis; L-lysine biosynthesis via DAP pathway; (S)-tetrahydrodipicolinate from L-aspartate: step 4/4. Functionally, catalyzes the conversion of 4-hydroxy-tetrahydrodipicolinate (HTPA) to tetrahydrodipicolinate. The sequence is that of 4-hydroxy-tetrahydrodipicolinate reductase from Salmonella choleraesuis (strain SC-B67).